A 706-amino-acid chain; its full sequence is Probable cyclic nucleotide-gated ion channel 3 (706 aa).

At 1-85 (MMNPQRNKFV…NDSYLQSWNK (85 aa)) the chain is on the cytoplasmic side. A helical transmembrane segment spans residues 86–106 (IFLLLSVVALAFDPLFFYIPY). At 107–119 (VKPERFCLNLDKK) the chain is on the extracellular side. The helical transmembrane segment at 120-140 (LQTIACVFRTFIDAFYVVHML) threads the bilayer. The Cytoplasmic segment spans residues 141–174 (FQFHTGFITPSSSGFGRGELNEKHKDIALRYLGS). Residues 175 to 195 (YFLIDLLSILPIPQVVVLAIV) traverse the membrane as a helical segment. At 196 to 208 (PRMRRPASLVAKE) the chain is on the extracellular side. A helical transmembrane segment spans residues 209-229 (LLKWVIFCQYVPRIARIYPLF). Topologically, residues 230 to 247 (KEVTRTSGLVTETAWAGA) are cytoplasmic. Residues 248–268 (ALNLFLYMLASHVFGSFWYLI) form a helical membrane-spanning segment. Over 269 to 371 (SIERKDRCWR…QNLKTSAFEG (103 aa)) the chain is Extracellular. A helical transmembrane segment spans residues 372 to 392 (EIIFAIVICISGLVLFALLIG). Over 393–706 (NMQKYLQSTT…ADPEFPMDET (314 aa)) the chain is Cytoplasmic. A nucleoside 3',5'-cyclic phosphate-binding positions include 477 to 600 (WFQA…KQLR) and D548. The calmodulin-binding stretch occupies residues 591-606 (YRRLHSKQLRHMFRFY). Positions 611–640 (QTWAACFIQAAWKRHCRRKLSKALREEEGK) constitute an IQ domain.

Belongs to the cyclic nucleotide-gated cation channel (TC 1.A.1.5) family. Homotetramer or heterotetramer.

It localises to the cell membrane. In terms of biological role, probable cyclic nucleotide-gated ion channel. This is Probable cyclic nucleotide-gated ion channel 3 (CNGC3) from Arabidopsis thaliana (Mouse-ear cress).